The sequence spans 122 residues: MAPRGRKRKAEAAMVAAAEKQERLANSGEGMEETTVVIEHCTSURVYGXNAAALSQALRLEAPELPVKVNPTKPRRGSFEVTLLRPDGSSAELWTGIKKGPPRKLKFPEPQEVVEELKKYLS.

N6-acetyllysine is present on K20. Positions 41–44 form a cross-link, cysteinyl-selenocysteine (Cys-Sec); redox-active; that stretch reads CTSU. A non-standard amino acid (selenocysteine) is located at residue U44.

Belongs to the SelWTH family.

Functionally, may be involved in a redox-related process. The chain is Selenoprotein H from Macaca fascicularis (Crab-eating macaque).